A 49-amino-acid polypeptide reads, in one-letter code: Large ribosomal subunit protein bL33 (49 aa).

The protein belongs to the bacterial ribosomal protein bL33 family.

This chain is Large ribosomal subunit protein bL33, found in Streptococcus suis (strain 98HAH33).